Consider the following 132-residue polypeptide: MSKKTDEILDSLKSLSLLEASELVKQIEEAFGVSAAASAGVVMAAPGAGGGASAAGEAAEEKTEFDVILESFDAAAKIKVLKEVRNATGLGLGEAKAMVEAAPKTIKEGASKEDAEALKKAIEAVGGKVTLK.

This sequence belongs to the bacterial ribosomal protein bL12 family. In terms of assembly, homodimer. Part of the ribosomal stalk of the 50S ribosomal subunit. Forms a multimeric L10(L12)X complex, where L10 forms an elongated spine to which 2 to 4 L12 dimers bind in a sequential fashion. Binds GTP-bound translation factors.

Functionally, forms part of the ribosomal stalk which helps the ribosome interact with GTP-bound translation factors. Is thus essential for accurate translation. The polypeptide is Large ribosomal subunit protein bL12 (Prochlorococcus marinus (strain MIT 9211)).